Consider the following 200-residue polypeptide: MASKIEILKANLEAALGARVVSLTEAIGELTLVVKASDYLEVAKTLRDDPKLRFEQLIDLCGVDYQTYGDGAYDGPRFAAVSQLLSVTNNWRLRLRVFAPDDDLPIVASLVDIWTSANWYEREAFDLYGLVFEGHPDLRRILTDYGFIGHPFRKDFPVSGYVEMRYDPEEKRVVYQPVTIEPREITPRVIREDRYGGLKH.

The protein belongs to the complex I 30 kDa subunit family. NDH-1 is composed of 14 different subunits. Subunits NuoB, C, D, E, F, and G constitute the peripheral sector of the complex.

It is found in the cell inner membrane. It carries out the reaction a quinone + NADH + 5 H(+)(in) = a quinol + NAD(+) + 4 H(+)(out). NDH-1 shuttles electrons from NADH, via FMN and iron-sulfur (Fe-S) centers, to quinones in the respiratory chain. The immediate electron acceptor for the enzyme in this species is believed to be ubiquinone. Couples the redox reaction to proton translocation (for every two electrons transferred, four hydrogen ions are translocated across the cytoplasmic membrane), and thus conserves the redox energy in a proton gradient. The chain is NADH-quinone oxidoreductase subunit C from Burkholderia ambifaria (strain MC40-6).